Consider the following 669-residue polypeptide: DNA mismatch repair protein MutL (669 aa).

The interval 356 to 382 (FEQRQNTENNQEKTFSSEESNSKPFME) is disordered. Residues 361 to 378 (NTENNQEKTFSSEESNSK) show a composition bias toward polar residues.

Belongs to the DNA mismatch repair MutL/HexB family.

This protein is involved in the repair of mismatches in DNA. It is required for dam-dependent methyl-directed DNA mismatch repair. May act as a 'molecular matchmaker', a protein that promotes the formation of a stable complex between two or more DNA-binding proteins in an ATP-dependent manner without itself being part of a final effector complex. The chain is DNA mismatch repair protein MutL from Staphylococcus aureus (strain USA300).